Consider the following 271-residue polypeptide: MVSLEQLREHETVRTDPVPESQALVDVRQLSLWYGTKQALYDISVRFPKNQVTAIIGPSGCGKSTLLRSLNRMNDLVPGVRVKGEVLYEGVNIYDPRVDPVAVRRHIGMVFQKPNPFPKTIFENVAFGLRLMGVKGSELEDRVVEALKRAALWEEVKDRFKKESGLRLSGGQQQRLCIARAIAVEPPLLLMDEPTSALDPIATQAIEDLILELKERYTVVIVTHNMQQAARVSDRTLFMHLGVLVEEGPTEVIFTKPKHPYTEAYITGRFG.

The region spanning 25–266 (VDVRQLSLWY…PKHPYTEAYI (242 aa)) is the ABC transporter domain. 57–64 (GPSGCGKS) contributes to the ATP binding site.

It belongs to the ABC transporter superfamily. Phosphate importer (TC 3.A.1.7) family. As to quaternary structure, the complex is composed of two ATP-binding proteins (PstB), two transmembrane proteins (PstC and PstA) and a solute-binding protein (PstS).

The protein resides in the cell inner membrane. It carries out the reaction phosphate(out) + ATP + H2O = ADP + 2 phosphate(in) + H(+). In terms of biological role, part of the ABC transporter complex PstSACB involved in phosphate import. Responsible for energy coupling to the transport system. In Thermus thermophilus (strain ATCC BAA-163 / DSM 7039 / HB27), this protein is Phosphate import ATP-binding protein PstB.